We begin with the raw amino-acid sequence, 329 residues long: UDP-glucose 4-epimerase (329 aa).

Residues 13 to 14 (YV), 33 to 38 (HNLSTG), 53 to 54 (DI), 76 to 80 (FAAFS), Asn95, Thr120, Tyr144, Lys148, and Phe172 each bind NAD(+). Residues Thr120 and Tyr144 each contribute to the substrate site. The active-site Proton acceptor is the Tyr144. Substrate is bound by residues Asn173, 190-191 (HL), 207-209 (SVY), Arg221, and 281-284 (RGRD).

The protein belongs to the NAD(P)-dependent epimerase/dehydratase family. Homodimer. The cofactor is NAD(+).

It catalyses the reaction UDP-alpha-D-glucose = UDP-alpha-D-galactose. It functions in the pathway carbohydrate metabolism; galactose metabolism. Functionally, involved in the metabolism of galactose. Catalyzes the conversion of UDP-galactose (UDP-Gal) to UDP-glucose (UDP-Glc) through a mechanism involving the transient reduction of NAD. The chain is UDP-glucose 4-epimerase (galE) from Streptomyces lividans.